A 582-amino-acid polypeptide reads, in one-letter code: Ubiquilin-1 (582 aa).

Disordered regions lie at residues 1–26 (MAESAESGGPPGAQDSAADSGPAEPK) and 102–136 (RPQDNSAQQTNTTGNSVTSSPAPDSNPTSGPAANS). Ala2 is modified (N-acetylalanine). A Ubiquitin-like domain is found at 28-102 (MKVTVKTPKE…VHLVIKTQNR (75 aa)). The segment covering 102–135 (RPQDNSAQQTNTTGNSVTSSPAPDSNPTSGPAAN) has biased composition (polar residues). The interval 169–422 (QLLSNPEMMV…LNNPLFAGNP (254 aa)) is interaction with UBXN4. STI1 domains are found at residues 173–201 (NPEMMVQIMENPFVQSMLSNPDLMRQLIM) and 203–242 (NPQMQQLIQRNPEISHMLNNPNIMRQTLELARNPAMMQEM). A disordered region spans residues 285–365 (NPFASLVSSP…NLVPGAGASM (81 aa)). Positions 290 to 304 (LVSSPSSAEGTQPSR) are enriched in polar residues. Residues 318–346 (QTPQSSPASGSTGSTTNTVSTSAGNATST) show a composition bias toward low complexity. 2 STI1 domains span residues 381–428 (NPQL…QEQM) and 432–464 (LPTFLQQMQNPDTLSAMSNPRAMQALLQIQQGL). Positions 481–513 (GLAAGNSGGPAGTTAPSTAPGEDTNPQGGAAEP) are disordered. One can recognise a UBA domain in the interval 539 to 579 (RFQQQLEQLSAMGFLNREANLQALIATGGDINAAIERLLGS).

In terms of assembly, monomer and homodimer. Heterodimer with UBQLN2. Binds CD47. Binds NBL1. Binds GABRA1, GABRA2, GABRA3, GABRA6, GABRB1, GABRB2 and GABRB3. Binds UBE3A, BTRC, P4HB and MTOR. Interacts with the proteasome 19S subunit. Interacts (via ubiquitin-like domain) with TREX1; the interaction is direct and may control TREX1 subcellular location. Forms a complex with UBXN4 and VCP. Interacts (via UBA domain) with UBQLN4 (via ubiquitin-like domain). Found in a complex with UBQLN2 and MAP1LC3A/B/C. The monomeric form interacts with PSEN1 and PSEN2. Interacts with ORAI1. Interacts (via UBA domain) with TICAM1. Interacts with EPS15. Interacts (via UBA domain) with UBA52 and (via ubiquitin-like domain) with PSMD3 and PSMD4. Interacts with HERPUD1. Interacts with MAP1LC3A/B/C in the presence of UBQLN4. Interacts (via ubiquitin-like domain) with EPS15 (via UIM domains) and both the ubiquitinated and non-ubiquitinated forms can interact with EPS15. Interacts (via ubiquitin-like domain) with EPS15L1, HGS (via UIM domain) and STAM2 (via UIM domain). Interacts with BCL2L10/BCL-B; in the cytoplasm. Degraded during both macroautophagy and during chaperone-mediated autophagy (CMA). Post-translationally, phosphorylated. In terms of processing, ubiquitinated.

The protein localises to the nucleus. The protein resides in the cytoplasm. It localises to the endoplasmic reticulum. It is found in the cytoplasmic vesicle. Its subcellular location is the autophagosome. The protein localises to the cell membrane. Functionally, plays an important role in the regulation of different protein degradation mechanisms and pathways including ubiquitin-proteasome system (UPS), autophagy and endoplasmic reticulum-associated protein degradation (ERAD) pathway. Mediates the proteasomal targeting of misfolded or accumulated proteins for degradation by binding (via UBA domain) to their polyubiquitin chains and by interacting (via ubiquitin-like domain) with the subunits of the proteasome. Plays a role in the ERAD pathway via its interaction with ER-localized proteins UBXN4, VCP and HERPUD1 and may form a link between the polyubiquitinated ERAD substrates and the proteasome. Plays a role in unfolded protein response (UPR) by attenuating the induction of UPR-inducible genes, DDTI3/CHOP, HSPA5 and PDIA2 during ER stress. Involved in the regulation of macroautophagy and autophagosome formation; required for maturation of autophagy-related protein LC3 from the cytosolic form LC3-I to the membrane-bound form LC3-II and may assist in the maturation of autophagosomes to autolysosomes by mediating autophagosome-lysosome fusion. Negatively regulates the TICAM1/TRIF-dependent toll-like receptor signaling pathway by decreasing the abundance of TICAM1 via the autophagic pathway. Promotes the ubiquitination and lysosomal degradation of ORAI1, consequently down-regulating the ORAI1-mediated Ca2+ mobilization. Suppresses the maturation and proteasomal degradation of amyloid beta A4 protein (A4) by stimulating the lysine 63 (K63)-linked polyubiquitination. Delays the maturation of A4 by sequestering it in the Golgi apparatus and preventing its transport to the cell surface for subsequent processing. Promotes the surface expression of GABA-A receptors. Ubiquitinates BCL2L10 and thereby stabilizes protein abundance. This chain is Ubiquilin-1 (Ubqln1), found in Rattus norvegicus (Rat).